Consider the following 365-residue polypeptide: Aminomethyltransferase (365 aa).

The protein belongs to the GcvT family. In terms of assembly, the glycine cleavage system is composed of four proteins: P, T, L and H.

The catalysed reaction is N(6)-[(R)-S(8)-aminomethyldihydrolipoyl]-L-lysyl-[protein] + (6S)-5,6,7,8-tetrahydrofolate = N(6)-[(R)-dihydrolipoyl]-L-lysyl-[protein] + (6R)-5,10-methylene-5,6,7,8-tetrahydrofolate + NH4(+). In terms of biological role, the glycine cleavage system catalyzes the degradation of glycine. In Frankia alni (strain DSM 45986 / CECT 9034 / ACN14a), this protein is Aminomethyltransferase.